The following is a 328-amino-acid chain: Formimidoylglutamase (328 aa).

6 residues coordinate Mn(2+): His133, Asp159, His161, Asp163, Asp253, and Asp255.

This sequence belongs to the arginase family. Mn(2+) serves as cofactor.

It catalyses the reaction N-formimidoyl-L-glutamate + H2O = formamide + L-glutamate. Its pathway is amino-acid degradation; L-histidine degradation into L-glutamate; L-glutamate from N-formimidoyl-L-glutamate (hydrolase route): step 1/1. Its function is as follows. Catalyzes the conversion of N-formimidoyl-L-glutamate to L-glutamate and formamide. The sequence is that of Formimidoylglutamase from Streptococcus pyogenes serotype M3 (strain ATCC BAA-595 / MGAS315).